A 118-amino-acid chain; its full sequence is MNYEQPPAYTGPGPAPGYPAQGYPAQGYPTQGYPAQGYPPQGYPAQGYPAQGYPNYPPGPPGPYTAQPGYQGYPQPGPPTNTVYVVEQGRRDDQSGEQACLATCWAALCCCCLCDMLT.

2 stretches are compositionally biased toward low complexity: residues 1–54 and 64–74; these read MNYE…QGYP and YTAQPGYQGYP. Positions 1-82 are disordered; it reads MNYEQPPAYT…YPQPGPPTNT (82 aa). The chain crosses the membrane as a helical span at residues 95–112; the sequence is SGEQACLATCWAALCCCC.

Belongs to the CYSTM1 family.

The protein resides in the membrane. This is Cysteine-rich and transmembrane domain-containing protein 1 (cystm1) from Danio rerio (Zebrafish).